Reading from the N-terminus, the 423-residue chain is MLDTLLINIGQLLTMDQEDGLLRREAMNTLPVIENGVVGIENGVITFVGTAEEAKGLQAKEVIDSGGKMVSPGLVDPHTHLVFGGSRENEIALKLQGVPYLEILEQGGGILSTVNATKQASKEELVQKAKFHLDRMLSFGVTTVEAKSGYGLDDETEWKQLEATAQLQKEHPIDLVSTFLGAHAVPKEYKGRSKEFLQWMLDLLPEMKEKQLVEFVDIFCETGVFSVEESKEFLLKAKELGFDVKIHADEIDPLGGAEAAAEIGAASADHLVGASDKGIEMLANSNTVATLLPGTTFYLNKESFARGRKMIDEGVAVALATDFNPGSCPTENIQLIMSIAMLKLKMTPEEVWNAVTVNSSYAINRGDVAGKIRVGRKADLVLWDAYNYAYVPYHYGVSHVNTVWKNGNIAYTRGEQSWSTATI.

Residues His78 and His80 each coordinate Fe(3+). Residues His78 and His80 each contribute to the Zn(2+) site. The 4-imidazolone-5-propanoate site is built by Arg87, Tyr150, and His183. Tyr150 lines the N-formimidoyl-L-glutamate pocket. His247 provides a ligand contact to Fe(3+). His247 is a binding site for Zn(2+). Glu250 is a 4-imidazolone-5-propanoate binding site. Fe(3+) is bound at residue Asp322. Asp322 serves as a coordination point for Zn(2+). Asn324 and Gly326 together coordinate N-formimidoyl-L-glutamate. Ser327 is a 4-imidazolone-5-propanoate binding site.

It belongs to the metallo-dependent hydrolases superfamily. HutI family. Zn(2+) serves as cofactor. The cofactor is Fe(3+).

The protein localises to the cytoplasm. The catalysed reaction is 4-imidazolone-5-propanoate + H2O = N-formimidoyl-L-glutamate. It functions in the pathway amino-acid degradation; L-histidine degradation into L-glutamate; N-formimidoyl-L-glutamate from L-histidine: step 3/3. Its function is as follows. Catalyzes the hydrolytic cleavage of the carbon-nitrogen bond in imidazolone-5-propanoate to yield N-formimidoyl-L-glutamate. It is the third step in the universal histidine degradation pathway. This chain is Imidazolonepropionase, found in Bacillus cereus (strain ATCC 14579 / DSM 31 / CCUG 7414 / JCM 2152 / NBRC 15305 / NCIMB 9373 / NCTC 2599 / NRRL B-3711).